A 332-amino-acid chain; its full sequence is Processive diacylglycerol alpha-glucosyltransferase (332 aa).

This sequence belongs to the glycosyltransferase group 1 family. Glycosyltransferase 4 subfamily. Mg(2+) is required as a cofactor.

The protein resides in the cell membrane. It carries out the reaction a 1,2-diacyl-sn-glycerol + UDP-alpha-D-glucose = a 1,2-diacyl-3-O-(alpha-D-glucopyranosyl)-sn-glycerol + UDP + H(+). The catalysed reaction is a 1,2-diacyl-3-O-(alpha-D-glucopyranosyl)-sn-glycerol + UDP-alpha-D-glucose = a 1,2-diacyl-3-O-[alpha-D-glucosyl-(1-&gt; 2)-alpha-D-glucosyl]-sn-glycerol + UDP + H(+). The protein operates within glycolipid metabolism; diglucosyl-diacylglycerol biosynthesis. Activated by the negatively charged lipids phosphatidylglycerol (PG), cardiolipin (CL), nonbilayer-prone 1,3-DAG, 1,2-dioleoylphosphatidylglycerol (DOPG) and 1,2-dioleoylphosphatidylserine (DOPS). Inhibited by 1,2-diacyl-3-O-(alpha-D-galactopyranosyl)-sn-glycerol, 1,2-diacyl-3-O-[6-O-acyl(alpha-D-glucopyranosyl)]-sn-glycerol and 1,2-diacyl-3-O-[alpha-D-glucopyranosyl-(1-&gt;2)-O-(6-O-acyl-alpha-D-glucopyranosyl)]-sn-glycerol. Processive glucosyltransferase involved in the biosynthesis of both the non-bilayer-prone alpha-monoglucosyldiacylglycerol and the bilayer-forming membrane lipid alpha-diglucosyldiacylglycerol. These are major components for maintaining the anionic lipid surface charge density, for balancing the bilayer to non-bilayer phase equilibria and for keeping a constant lipid bilayer spontaneous curvature (curvature packing stress). Catalyzes the transfer of a glucosyl residue from UDP-Glc to diacylglycerol (DAG) acceptor to form the corresponding alpha-glucosyl-DAG (1,2-diacyl-3-O-(alpha-D-glucopyranosyl)-sn-glycerol), which then acts as acceptor to give alpha-diglucosyl-DAG product (3-O-(alpha-D-glucopyranosyl-alpha-(1-&gt;2)-D-glucopyranosyl)-1,2-diacyl-sn-glycerol). It can only use UDP-Glc as sugar donor. The polypeptide is Processive diacylglycerol alpha-glucosyltransferase (dgs) (Acholeplasma laidlawii).